A 443-amino-acid polypeptide reads, in one-letter code: Protein SCAR (443 aa).

The interval 1 to 96 (MVLITRYLPS…DYHRNTSIDT (96 aa)) is interaction with brk1 and abiA. Residues 166–201 (VAEQQKLHEEARQRKRERREARLKKKGEKNEVEVKK) adopt a coiled-coil conformation. 2 disordered regions span residues 176–197 (ARQR…KNEV) and 220–386 (INIE…RSDL). Basic residues predominate over residues 178 to 192 (QRKRERREARLKKKG). The segment covering 221 to 252 (NIESPHTSSPQIQHQSNNTATPQHTTQHFGTN) has biased composition (polar residues). 2 stretches are compositionally biased toward low complexity: residues 263 to 277 (SQSS…INSY) and 285 to 305 (NTST…TGFN). Pro residues predominate over residues 306–323 (TPPPPMSNNNNMPPPPPM). Residues 324-338 (QQNGGAANNRLSVHN) show a composition bias toward polar residues. Residues 346–365 (PAPPPPPPPPSAPAPPPPPM) are compositionally biased toward pro residues. The WH2 domain maps to 382-399 (ARSDLLSSIMQGMALKPA).

The protein belongs to the SCAR/WAVE family. As to quaternary structure, part of a Scar/WAVE complex containing brk1, scrA, abiA, pirA and napA. Interacts with brk1 and abiA.

Its subcellular location is the cytoplasm. The protein resides in the cytoskeleton. It is found in the cell projection. It localises to the pseudopodium tip. The protein localises to the filopodium tip. Its function is as follows. Involved in regulation of actin and microtubule organization. Regulates phagocytosis and macropinocytosis. The protein is Protein SCAR (scrA) of Dictyostelium discoideum (Social amoeba).